A 185-amino-acid chain; its full sequence is Ribosome-recycling factor (185 aa).

Belongs to the RRF family.

Its subcellular location is the cytoplasm. Responsible for the release of ribosomes from messenger RNA at the termination of protein biosynthesis. May increase the efficiency of translation by recycling ribosomes from one round of translation to another. The chain is Ribosome-recycling factor from Halorhodospira halophila (strain DSM 244 / SL1) (Ectothiorhodospira halophila (strain DSM 244 / SL1)).